A 473-amino-acid chain; its full sequence is MKLSMPRFDQAPVLVVGDVMLDRYWHGGTSRISPEAPVPVVKVDQIEDRPGGAANVALNIAALGAPAALIGVTGQDEAADSLANSLQAAGVRSVFQRIAHQPTIVKLRVMSRHQQLLRIDFEEPFATDPLSLGAEVESLLEGVKVLVLSDYGKGALKNHQSLIQAARAKGIPVLADPKGKDFSIYRGASLITPNLSEFETIVGRCADEAELVAKGLQLLLDLDLGALLVTRGEHGMTLLRTGQPALHLPARAREVFDVTGAGDTVISTLAAAIAAGEDLPHAVGLANLAAGIVVGKLGTAAISAPELRRAIQREEGSERGVLGLEQLLLAIDDARAHNEKIVFTNGCFDILHAGHVTYLEQARAQGDRLIVAVNDDASVSRLKGPGRPINSVDRRMAVLAGLGAVDWVISFPEGTPENLLSQVKPDVLVKGGDYGIDQVVGADIVKGYGGTVKVLGLVENSSTTAIVEKIRKN.

Residues Met-1–Ser-317 form a ribokinase region. Asn-194 to Glu-197 is an ATP binding site. Asp-263 is a catalytic residue. A cytidylyltransferase region spans residues Phe-343–Asn-473.

In the N-terminal section; belongs to the carbohydrate kinase PfkB family. It in the C-terminal section; belongs to the cytidylyltransferase family. In terms of assembly, homodimer.

The enzyme catalyses D-glycero-beta-D-manno-heptose 7-phosphate + ATP = D-glycero-beta-D-manno-heptose 1,7-bisphosphate + ADP + H(+). It carries out the reaction D-glycero-beta-D-manno-heptose 1-phosphate + ATP + H(+) = ADP-D-glycero-beta-D-manno-heptose + diphosphate. It participates in nucleotide-sugar biosynthesis; ADP-L-glycero-beta-D-manno-heptose biosynthesis; ADP-L-glycero-beta-D-manno-heptose from D-glycero-beta-D-manno-heptose 7-phosphate: step 1/4. It functions in the pathway nucleotide-sugar biosynthesis; ADP-L-glycero-beta-D-manno-heptose biosynthesis; ADP-L-glycero-beta-D-manno-heptose from D-glycero-beta-D-manno-heptose 7-phosphate: step 3/4. Catalyzes the phosphorylation of D-glycero-D-manno-heptose 7-phosphate at the C-1 position to selectively form D-glycero-beta-D-manno-heptose-1,7-bisphosphate. In terms of biological role, catalyzes the ADP transfer from ATP to D-glycero-beta-D-manno-heptose 1-phosphate, yielding ADP-D-glycero-beta-D-manno-heptose. This Pseudomonas putida (strain W619) protein is Bifunctional protein HldE.